Consider the following 393-residue polypeptide: Ig heavy chain C region (393 aa).

Ig-like domains follow at residues 63-157 (PTVI…RNIT), 168-260 (PVIK…ASIH), and 270-370 (PSVS…RTVN). 8 N-linked (GlcNAc...) asparagine glycosylation sites follow: Asn-119, Asn-155, Asn-200, Asn-230, Asn-329, Asn-366, Asn-370, and Asn-380.

This Heterodontus francisci (Horn shark) protein is Ig heavy chain C region.